The primary structure comprises 660 residues: Threonine--tRNA ligase (660 aa).

A TGS domain is found at 1 to 49 (MPDSIVHVKKGQRFLDVIKDKNVVAVKIDSVLHDLRDVAERDVDAIPVS). The catalytic stretch occupies residues 225–554 (DHRRIIAEMD…LLEHYAGKLP (330 aa)). Cysteine 318, histidine 369, and histidine 531 together coordinate Zn(2+).

It belongs to the class-II aminoacyl-tRNA synthetase family. In terms of assembly, homodimer. Zn(2+) is required as a cofactor.

The protein resides in the cytoplasm. The catalysed reaction is tRNA(Thr) + L-threonine + ATP = L-threonyl-tRNA(Thr) + AMP + diphosphate + H(+). In terms of biological role, catalyzes the attachment of threonine to tRNA(Thr) in a two-step reaction: L-threonine is first activated by ATP to form Thr-AMP and then transferred to the acceptor end of tRNA(Thr). This Thermoplasma acidophilum (strain ATCC 25905 / DSM 1728 / JCM 9062 / NBRC 15155 / AMRC-C165) protein is Threonine--tRNA ligase.